The chain runs to 313 residues: Aspartate carbamoyltransferase catalytic subunit (313 aa).

Carbamoyl phosphate is bound by residues arginine 59 and threonine 60. Lysine 87 lines the L-aspartate pocket. 3 residues coordinate carbamoyl phosphate: arginine 109, histidine 137, and glutamine 140. Residues arginine 170 and arginine 224 each coordinate L-aspartate. Positions 265 and 266 each coordinate carbamoyl phosphate.

The protein belongs to the aspartate/ornithine carbamoyltransferase superfamily. ATCase family. In terms of assembly, heterododecamer (2C3:3R2) of six catalytic PyrB chains organized as two trimers (C3), and six regulatory PyrI chains organized as three dimers (R2).

The enzyme catalyses carbamoyl phosphate + L-aspartate = N-carbamoyl-L-aspartate + phosphate + H(+). It participates in pyrimidine metabolism; UMP biosynthesis via de novo pathway; (S)-dihydroorotate from bicarbonate: step 2/3. In terms of biological role, catalyzes the condensation of carbamoyl phosphate and aspartate to form carbamoyl aspartate and inorganic phosphate, the committed step in the de novo pyrimidine nucleotide biosynthesis pathway. The sequence is that of Aspartate carbamoyltransferase catalytic subunit from Rhizobium meliloti (strain 1021) (Ensifer meliloti).